The sequence spans 284 residues: Tropomyosin (284 aa).

The stretch at methionine 1–tyrosine 284 forms a coiled coil. Composition is skewed to basic and acidic residues over residues leucine 29 to glutamate 42 and alanine 111 to alanine 136. Disordered regions lie at residues leucine 29–arginine 49 and alanine 111–lysine 149.

This sequence belongs to the tropomyosin family.

Functionally, tropomyosin, in association with the troponin complex, plays a central role in the calcium dependent regulation of muscle contraction. This chain is Tropomyosin, found in Clonorchis sinensis (Chinese liver fluke).